The sequence spans 1169 residues: Rabankyrin-5 (1169 aa).

An N-acetylalanine modification is found at A2. Positions 68-130 (SDLKIKVGDR…IYTDELEFRE (63 aa)) constitute a BTB domain. 5 ANK repeats span residues 217-247 (KTEY…QLPG), 255-284 (NGDL…DVDM), 288-317 (SGWS…FVNA), 322-362 (AQET…NPNM), and 366-396 (KGRT…DLEL). The residue at position 270 (S270) is a Phosphoserine. The short motif at 421–423 (NPF) is the NPF element. 16 ANK repeats span residues 490 to 519 (WGET…NPNL), 542 to 572 (HLQT…ALHA), 588 to 617 (RDQT…AIND), 621 to 650 (DGQT…DINV), 654 to 683 (DGET…DMSV), 687 to 716 (KGNP…DATC), 724 to 753 (CLQT…DVNS), 769 to 798 (DGQT…NVNA), 802 to 832 (EGRT…HLNV), 836 to 865 (QGLT…GAAE), 870 to 899 (KGRN…NVNS), 905 to 934 (SKLT…KVNE), 938 to 967 (HRQT…DFAA), 971 to 1001 (NGNN…DAEA), 1005 to 1037 (RGQS…GYPL), and 1043 to 1072 (DGST…RLGV). An interaction with RHOD and RAB5A region spans residues 650–759 (VRTQDGETAL…DVNSPRQPGA (110 aa)). The FYVE-type zinc-finger motif lies at 1104–1164 (WCDGSYCYEC…VCNICFDVLT (61 aa)). Residues C1110, C1113, C1126, C1129, C1134, C1137, C1156, and C1159 each contribute to the Zn(2+) site.

In terms of assembly, interacts with RAB5A (in GTP-bound form). Interacts with RHOD (independent of GTP-loaded status). Interacts with EHD1. Interacts with VPS26A; the interaction is independent of EHD1 and is indicative for an association with the cargo recognition subcomplex of the retromer complex. High expression in whole adult brain and intermediate expression in all other tissues and specific brain regions examined, including fetal brain.

Its subcellular location is the cytoplasm. The protein resides in the endosome membrane. The protein localises to the early endosome. Proposed effector of Rab5. Binds to phosphatidylinositol 3-phosphate (PI(3)P). Involved in homotypic early endosome fusion and to a lesser extent in heterotypic fusion of chlathrin-coated vesicles with early endosomes. Involved in macropinocytosis; the function is dependent on Rab5-GTP. Required for correct endosomal localization. Involved in the internalization and trafficking of activated tyrosine kinase receptors such as PDGFRB. Regulates the subcellular localization of the retromer complex in a EHD1-dependent manner. Involved in endosome-to-Golgi transport and biosynthetic transport to late endosomes and lysosomes indicative for a regulation of retromer complex-mediated retrograde transport. This Homo sapiens (Human) protein is Rabankyrin-5 (ANKFY1).